Reading from the N-terminus, the 530-residue chain is Cytochrome P450 2U1 (530 aa).

The next 4 membrane-spanning stretches (helical) occupy residues 21-41, 99-119, 247-267, and 328-348; these read LQAV…DWVW, VYGN…LSDF, ICLH…YLPF, and LFYI…NSLL. Heme is bound at residue Cys-476. Residues 481 to 501 form a helical membrane-spanning segment; sequence LAKMELFLMFVSLMQSFTFAL.

This sequence belongs to the cytochrome P450 family. It depends on heme as a cofactor. As to expression, specifically expressed in thymus and brain. In brain, expressed in cortex, cerebellum, olfactory bulbs, pons and medulla and the limbic structures (at protein level).

The protein resides in the endoplasmic reticulum membrane. It is found in the microsome membrane. The protein localises to the mitochondrion inner membrane. The catalysed reaction is an omega-methyl-long-chain fatty acid + reduced [NADPH--hemoprotein reductase] + O2 = an omega-hydroxy-long-chain fatty acid + oxidized [NADPH--hemoprotein reductase] + H2O + H(+). It catalyses the reaction (5Z,8Z,11Z,14Z)-eicosatetraenoate + reduced [NADPH--hemoprotein reductase] + O2 = 19-hydroxy-(5Z,8Z,11Z,14Z)-eicosatetraenoate + oxidized [NADPH--hemoprotein reductase] + H2O + H(+). It carries out the reaction (5Z,8Z,11Z,14Z)-eicosatetraenoate + reduced [NADPH--hemoprotein reductase] + O2 = 20-hydroxy-(5Z,8Z,11Z,14Z)-eicosatetraenoate + oxidized [NADPH--hemoprotein reductase] + H2O + H(+). The enzyme catalyses N-[(5Z,8Z,11Z,14Z)-eicosatetraenoyl]-serotonin + reduced [NADPH--hemoprotein reductase] + O2 = 2-oxo-N-[(5Z,8Z,11Z,14Z)-eicosatetraenoyl]-serotonin + oxidized [NADPH--hemoprotein reductase] + H2O + H(+). A cytochrome P450 monooxygenase involved in the metabolism of arachidonic acid and its conjugates. Mechanistically, uses molecular oxygen inserting one oxygen atom into a substrate, and reducing the second into a water molecule, with two electrons provided by NADPH via cytochrome P450 reductase (CPR; NADPH-ferrihemoprotein reductase). Acts as an omega and omega-1 hydroxylase for arachidonic acid and possibly for other long chain fatty acids. May modulate the arachidonic acid signaling pathway and play a role in other fatty acid signaling processes. May down-regulate the biological activities of N-arachidonoyl-serotonin, an endocannabinoid that has anti-nociceptive effects through inhibition of fatty acid amide hydrolase FAAH, TRPV1 receptor and T-type calcium channels. Catalyzes C-2 oxidation of the indole ring of N-arachidonoyl-serotonin forming a less active product 2-oxo-N-arachidonoyl-serotonin. The sequence is that of Cytochrome P450 2U1 (Cyp2u1) from Rattus norvegicus (Rat).